The sequence spans 361 residues: MALTRLLIKDFRNIESADLALASGFNFLVGPNGSGKTSVLEAIYTLGHGRAFRSLQAGRVIRHECAEFVLHGRVDANERESSVGLSKSRQGDTKVRIDGTDGHKVAELAQLLPMQLITPEGFTLLNGGPKFRRAFLDWGCFHNEPGFFMAWSNLKRLLKQRNAALRQVSRYTQIRAWDQEIIPLAERISEWRAAYSDAIAADISATCALFLPEFALSFSFQRGWDKESDYGELLERQFVRDRALTYTAVGPHKADFRIRADGTPVEDLLSRGQLKLLMCALRLAQGEFLTRQSGRRCLYLLDDFASELDTGRRRLLAERLKATQAQVFVSAVSAEQVADMVGEKGKMFRVEHGKIEVQPQD.

Position 30-37 (30-37 (GPNGSGKT)) interacts with ATP.

It belongs to the RecF family.

It is found in the cytoplasm. Its function is as follows. The RecF protein is involved in DNA metabolism; it is required for DNA replication and normal SOS inducibility. RecF binds preferentially to single-stranded, linear DNA. It also seems to bind ATP. The polypeptide is DNA replication and repair protein RecF (Yersinia enterocolitica serotype O:8 / biotype 1B (strain NCTC 13174 / 8081)).